An 89-amino-acid chain; its full sequence is Small ribosomal subunit protein uS14 (89 aa).

This sequence belongs to the universal ribosomal protein uS14 family. As to quaternary structure, part of the 30S ribosomal subunit. Contacts proteins S3 and S10.

Binds 16S rRNA, required for the assembly of 30S particles and may also be responsible for determining the conformation of the 16S rRNA at the A site. The protein is Small ribosomal subunit protein uS14 of Porphyromonas gingivalis (strain ATCC 33277 / DSM 20709 / CIP 103683 / JCM 12257 / NCTC 11834 / 2561).